The following is a 351-amino-acid chain: Columbamine O-methyltransferase (351 aa).

Residues Gly198, Asp221, Asp241, Met242, and Lys255 each contribute to the S-adenosyl-L-methionine site. The Proton acceptor role is filled by His259.

Belongs to the class I-like SAM-binding methyltransferase superfamily. Cation-independent O-methyltransferase family. COMT subfamily. As to quaternary structure, homodimer.

It catalyses the reaction columbamine + S-adenosyl-L-methionine = palmatine + S-adenosyl-L-homocysteine + H(+). It carries out the reaction (S)-tetrahydrocolumbamine + S-adenosyl-L-methionine = (S)-tetrahydropalmatine + S-adenosyl-L-homocysteine + H(+). Its pathway is alkaloid biosynthesis; palmatine biosynthesis; palmatine from columbamine: step 1/1. Its function is as follows. Catalyzes the conversion of tetrahydrocolumbamine to (S)-tetrahydropalmatine and of columbamine to palmatine, an isoquinoline alkaloid. This chain is Columbamine O-methyltransferase, found in Coptis japonica (Japanese goldthread).